Reading from the N-terminus, the 142-residue chain is MVLSPADKSNVKAAWGKVGGHAGEYGAEALERMFLSFPTTKTYFPHFDLSHGSAQVKGHGKKVADALTLAVGHVDDMPNALSALSDLHAHKLRVDPVNFKLLSHCLLVTLAAHLPAEFTPAVHASLDKFLASVSTVLTSKYR.

Residues 2 to 142 (VLSPADKSNV…VSTVLTSKYR (141 aa)) form the Globin domain. Position 4 is a phosphoserine (S4). N6-succinyllysine is present on residues K8 and K12. K17 carries the N6-acetyllysine; alternate modification. K17 bears the N6-succinyllysine; alternate mark. Y25 carries the post-translational modification Phosphotyrosine. Position 36 is a phosphoserine (S36). K41 bears the N6-succinyllysine mark. Residue S50 is modified to Phosphoserine. H59 is a binding site for O2. H88 is a heme b binding site. Residue S103 is modified to Phosphoserine. T109 carries the phosphothreonine modification. Phosphoserine occurs at positions 125 and 132. Phosphothreonine occurs at positions 135 and 138. Position 139 is a phosphoserine (S139).

The protein belongs to the globin family. As to quaternary structure, heterotetramer of two alpha chains and two beta chains. As to expression, red blood cells.

In terms of biological role, involved in oxygen transport from the lung to the various peripheral tissues. Its function is as follows. Hemopressin acts as an antagonist peptide of the cannabinoid receptor CNR1. Hemopressin-binding efficiently blocks cannabinoid receptor CNR1 and subsequent signaling. This chain is Hemoglobin subunit alpha (HBA), found in Macaca fuscata fuscata (Japanese macaque).